The sequence spans 120 residues: uncharacterized protein (120 aa).

The protein belongs to the asp23 family.

This is an uncharacterized protein from Bacillus subtilis (strain 168).